A 523-amino-acid chain; its full sequence is MVKINIKSSTDNKFDVDVELGITVADFKKVIATKCSIPADQQRIIYSGRILKDHQTLDEIKIQDGHTVHLVKGAAPPPPPPVEQQVPTPSNTQPQGIPGVPQNINDMMNNPMIQEMFNSRMMDSLLDNPDIFRDMMMGNPEMREVLNNNPEMAQMLSDPRQLRQSLEMMRNPELMREMMRNADRAMINIENHPEGFNLLRRMYTDIQEPLMNAANQQAASQNQTNSNPIQTNTDANPNSQPLPNPWSTNSSSTSSNPTSSSPSSRPTTGSSTNTGASNPWASMFSGGGGGMGGGTNNTGTNNTGSTNNTGASNPWASMFGGGGGGMGGMGGMEGMLGMDPERVQQLLNNPVAQQMMQRLMSDPAMMQQMITMNPQLRQMMDSNPQLREAMNNPEFLNMMTNPENMNAMMQLQQAMGTLRNNGVFPGGMGGMGGMGGMGGMGGMGGMDFSQFGNMFGGMGGMGGMGNNNSSTTRPPVNQEPPEQRFRLQLEQLEELGFVDRAANISALTSTNGNINLAIDRLLR.

Residues 2 to 77 (VKINIKSSTD…VHLVKGAAPP (76 aa)) form the Ubiquitin-like domain. Positions 70–99 (LVKGAAPPPPPPVEQQVPTPSNTQPQGIPG) are disordered. 2 STI1 domains span residues 100-135 (VPQN…FRDM) and 139-178 (NPEM…MREM). Residues 215 to 227 (NQQAASQNQTNSN) show a composition bias toward low complexity. Residues 215–325 (NQQAASQNQT…ASMFGGGGGG (111 aa)) form a disordered region. The segment covering 228-241 (PIQTNTDANPNSQP) has biased composition (polar residues). Positions 245 to 278 (PWSTNSSSTSSNPTSSSPSSRPTTGSSTNTGASN) are enriched in low complexity. Positions 285-296 (SGGGGGMGGGTN) are enriched in gly residues. The span at 297-310 (NTGTNNTGSTNNTG) shows a compositional bias: low complexity. STI1 domains are found at residues 339-380 (DPER…RQMM) and 383-415 (NPQL…QQAM). Positions 480-523 (PPEQRFRLQLEQLEELGFVDRAANISALTSTNGNINLAIDRLLR) constitute a UBA domain.

Its function is as follows. Stable protein which acts as an antagonist of nosA by repressing cellular differentiation after the tight-aggregate stage, when cells differentiate into two precursor cell types, prespore and prestalk cells, prior to the formation of fruiting bodies. This chain is Ubiquilin (ubqln), found in Dictyostelium discoideum (Social amoeba).